The chain runs to 389 residues: PqqA peptide cyclase (389 aa).

Residues 19-235 form the Radical SAM core domain; that stretch reads VGLPLWLLAE…NEYRVRLEAE (217 aa). 3 residues coordinate [4Fe-4S] cluster: cysteine 33, cysteine 37, and cysteine 40.

It belongs to the radical SAM superfamily. PqqE family. In terms of assembly, interacts with PqqD. The interaction is necessary for activity of PqqE. [4Fe-4S] cluster serves as cofactor.

The catalysed reaction is [PQQ precursor protein] + S-adenosyl-L-methionine = E-Y cross-linked-[PQQ precursor protein] + 5'-deoxyadenosine + L-methionine + H(+). It participates in cofactor biosynthesis; pyrroloquinoline quinone biosynthesis. Functionally, catalyzes the cross-linking of a glutamate residue and a tyrosine residue in the PqqA protein as part of the biosynthesis of pyrroloquinoline quinone (PQQ). In Pseudomonas savastanoi pv. phaseolicola (strain 1448A / Race 6) (Pseudomonas syringae pv. phaseolicola (strain 1448A / Race 6)), this protein is PqqA peptide cyclase.